The sequence spans 158 residues: Probable inactive acireductone dioxygenase 2 (158 aa).

The protein belongs to the acireductone dioxygenase (ARD) family.

Its subcellular location is the cytoplasm. The protein resides in the nucleus. Its function is as follows. Probable inactive acireductone dioxygenase. This chain is Probable inactive acireductone dioxygenase 2, found in Caenorhabditis elegans.